The following is a 129-amino-acid chain: Large ribosomal subunit protein uL14m (129 aa).

It belongs to the universal ribosomal protein uL14 family.

It is found in the mitochondrion. The polypeptide is Large ribosomal subunit protein uL14m (RPL14) (Acanthamoeba castellanii (Amoeba)).